The following is a 456-amino-acid chain: MVVGQRERKRRCIRGEPLMNDTTWVLDGGRLIDPANGIDRIARLVLHEGKVHSIDTPDGDVPPDAGRLDVTGKIVAPGLVDLATELREPGSEEDETIQTGSNAALAGGYTTVLCCSSTKPLMDSAASVQLVRQIAQRVDGVRVLPIACLSKGRQAEQMAELGILAAAGAAGFSDTPRPMPNDALLKRALDYCRMFDLPIFDRPEVPELADGGVMHDGQIGLILGLKGLPTEAEDLAVARDVRLAEATKGRLHVGPVSTMGSIDMIGRVKSRGIHISASVCPHNLFGSDELLRSYDSRYKVHPPMRSPSHVEALRNAVAEGVIDAIESGHMPRAQEKKANDLDLAPFGASALETTLAAIATDLVETKILPWSRAIECLSTAPARIAGVKGGTLSVGANADVTVIDPLNAWSVEAKEFRSRCHSSPMTGRTLTARVTHTLVGGRLKFELHPTVASAAS.

This sequence belongs to the metallo-dependent hydrolases superfamily. DHOase family. Class I DHOase subfamily.

The catalysed reaction is (S)-dihydroorotate + H2O = N-carbamoyl-L-aspartate + H(+). Its pathway is pyrimidine metabolism; UMP biosynthesis via de novo pathway; (S)-dihydroorotate from bicarbonate: step 3/3. Catalyzes the reversible cyclization of carbamoyl aspartate to dihydroorotate. This chain is Putative dihydroorotase, found in Rhodopirellula baltica (strain DSM 10527 / NCIMB 13988 / SH1).